The sequence spans 515 residues: Protein aaim-1 (515 aa).

The first 16 residues, 1 to 16 (MRLLFFFSILYTASLC), serve as a signal peptide directing secretion. Asn-46 and Asn-127 each carry an N-linked (GlcNAc...) asparagine glycan. The interval 248–267 (RRTDPNSKFKPRPTTSQSNG) is disordered. A glycan (N-linked (GlcNAc...) asparagine) is linked at Asn-447.

In terms of tissue distribution, expressed in the terminal bulb of the pharynx and the posterior of the intestine (at protein level). Expressed by intestinal cells and secreted into the intestinal lumen (at protein level).

It localises to the secreted. Functionally, plays a role in promoting resistance to bacterial pathogens such as P.aeruginosa by inhibiting bacterial intestinal colonization. Its function is as follows. (Microbial infection) Promotes infection by microsporidian pathogens such as N.parisii in the early larval stages of development. Involved in ensuring the proper orientation and location of the spore proteins of N.parisii during intestinal cell invasion. This Caenorhabditis elegans protein is Protein aaim-1.